The primary structure comprises 1219 residues: Cullin-associated NEDD8-dissociated protein 1 (1219 aa).

Position 2 is an N-acetylalanine (Ala-2). HEAT repeat units follow at residues 44–81, 83–119, 209–244, 248–288, 327–363, 367–404, 423–460, 464–503, 599–636, 639–676, 808–848, 850–883, 927–964, 966–998, 1002–1039, 1043–1079, 1101–1137, and 1141–1180; these read DLEV…KVGE, RIVE…QIAP, KATV…AVGY, THLG…RCPR, EEDD…SRSE, KVYQ…QTGN, QEVS…VLPD, DHIG…SHAP, AELP…LHIN, CVLD…AYGD, KNCS…RKDL, AHAG…IAVG, SSVE…IEPE, LVPA…ERPE, EIIF…YKPN, GLLP…DDGL, NPSS…KCPS, and AVLD…ALRA. The segment at 311–340 is disordered; it reads FTDNMEEDTDNETLEDEEDDESANEYTDDE. Acidic residues predominate over residues 314–340; it reads NMEEDTDNETLEDEEDDESANEYTDDE.

This sequence belongs to the CAND family. As to quaternary structure, interacts with CUL1 and CUL4. Binds unneddylated CUL1, but cannot bind CUL1 once it has been neddylated. In terms of tissue distribution, highly expressed in roots. Expressed in stems, flowers and siliques.

Key assembly factor of SCF (SKP1-CUL1-F-box protein) E3 ubiquitin ligase complexes that promotes the exchange of the substrate-recognition F-box subunit in SCF complexes, thereby playing a key role in the cellular repertoire of SCF complexes. Acts as a F-box protein exchange factor. Required for SCF(TIR1) function. Modulates SCF(TIR1) function through its interactions with the CUL1 subunit. Represses photomorphogenesis by promoting HY5 degradation in darkness. The protein is Cullin-associated NEDD8-dissociated protein 1 (CAND1) of Arabidopsis thaliana (Mouse-ear cress).